Here is a 276-residue protein sequence, read N- to C-terminus: uncharacterized protein (276 aa).

Residues Pro-20 to Ser-137 enclose the AB hydrolase-1 domain. Residues Gly-57–Tyr-76 form a disordered region.

It belongs to the AB hydrolase superfamily.

This is an uncharacterized protein from Staphylococcus aureus (strain bovine RF122 / ET3-1).